The primary structure comprises 209 residues: MSTLHLIDHPLVQHKLTLMRRKEASTNSFRRMLGELSTLMAYEITRDMPLQDIEIETPLETMTGKVIDGKKLVLVSILRAGNGFLDGMLNVVPGARIGHIGLYRDPETLQPVEYYFKMPSEMEERDVLVVDPMLATGNSAAAAVARLKQLNPKSIKFMCLLAAPEGVATMQKAHPDVDIYTAAVDRQLDAHGYILPGLGDAGDRIFGTK.

5-phospho-alpha-D-ribose 1-diphosphate contacts are provided by residues Arg79, Arg104, and 131-139 (DPMLATGNS). Uracil is bound by residues Ile194 and 199-201 (GDA). Asp200 is a binding site for 5-phospho-alpha-D-ribose 1-diphosphate.

It belongs to the UPRTase family. Mg(2+) is required as a cofactor.

The catalysed reaction is UMP + diphosphate = 5-phospho-alpha-D-ribose 1-diphosphate + uracil. It functions in the pathway pyrimidine metabolism; UMP biosynthesis via salvage pathway; UMP from uracil: step 1/1. Allosterically activated by GTP. Catalyzes the conversion of uracil and 5-phospho-alpha-D-ribose 1-diphosphate (PRPP) to UMP and diphosphate. The polypeptide is Uracil phosphoribosyltransferase (Delftia acidovorans (strain DSM 14801 / SPH-1)).